We begin with the raw amino-acid sequence, 144 residues long: Putative pre-16S rRNA nuclease (144 aa).

It belongs to the YqgF nuclease family.

The protein resides in the cytoplasm. Functionally, could be a nuclease involved in processing of the 5'-end of pre-16S rRNA. The chain is Putative pre-16S rRNA nuclease from Symbiobacterium thermophilum (strain DSM 24528 / JCM 14929 / IAM 14863 / T).